The following is a 365-amino-acid chain: Alanine racemase (365 aa).

The active-site Proton acceptor; specific for D-alanine is the lysine 32. Lysine 32 is modified (N6-(pyridoxal phosphate)lysine). Substrate is bound at residue arginine 128. Tyrosine 257 serves as the catalytic Proton acceptor; specific for L-alanine. Methionine 305 provides a ligand contact to substrate.

It belongs to the alanine racemase family. Pyridoxal 5'-phosphate is required as a cofactor.

The catalysed reaction is L-alanine = D-alanine. It functions in the pathway amino-acid biosynthesis; D-alanine biosynthesis; D-alanine from L-alanine: step 1/1. Catalyzes the interconversion of L-alanine and D-alanine. May also act on other amino acids. This is Alanine racemase (alr) from Francisella tularensis subsp. holarctica (strain LVS).